The sequence spans 50 residues: C-C motif chemokine 5 (50 aa).

Belongs to the intercrine beta (chemokine CC) family.

The protein localises to the secreted. Functionally, chemoattractant for blood monocytes, memory T-helper cells and eosinophils. Causes the release of histamine from basophils and activates eosinophils. May activate several chemokine receptors including CCR1, CCR3, CCR4 and CCR5. May also be an agonist of the G protein-coupled receptor GPR75. Together with GPR75, may play a role in neuron survival through activation of a downstream signaling pathway involving the PI3, Akt and MAP kinases. By activating GPR75 may also play a role in insulin secretion by islet cells. The protein is C-C motif chemokine 5 (CCL5) of Sus scrofa (Pig).